Here is a 248-residue protein sequence, read N- to C-terminus: Enolase-phosphatase E1 (248 aa).

Positions 14 and 16 each coordinate Mg(2+). Substrate-binding positions include 145–146 (SS) and Lys179. Asp204 contacts Mg(2+).

This sequence belongs to the HAD-like hydrolase superfamily. MasA/MtnC family. As to quaternary structure, monomer. The cofactor is Mg(2+).

The protein localises to the cytoplasm. The protein resides in the nucleus. The enzyme catalyses 5-methylsulfanyl-2,3-dioxopentyl phosphate + H2O = 1,2-dihydroxy-5-(methylsulfanyl)pent-1-en-3-one + phosphate. It participates in amino-acid biosynthesis; L-methionine biosynthesis via salvage pathway; L-methionine from S-methyl-5-thio-alpha-D-ribose 1-phosphate: step 3/6. The protein operates within amino-acid biosynthesis; L-methionine biosynthesis via salvage pathway; L-methionine from S-methyl-5-thio-alpha-D-ribose 1-phosphate: step 4/6. In terms of biological role, bifunctional enzyme that catalyzes the enolization of 2,3-diketo-5-methylthiopentyl-1-phosphate (DK-MTP-1-P) into the intermediate 2-hydroxy-3-keto-5-methylthiopentenyl-1-phosphate (HK-MTPenyl-1-P), which is then dephosphorylated to form the acireductone 1,2-dihydroxy-3-keto-5-methylthiopentene (DHK-MTPene). The polypeptide is Enolase-phosphatase E1 (Caenorhabditis elegans).